The sequence spans 448 residues: tRNA modification GTPase MnmE (448 aa).

(6S)-5-formyl-5,6,7,8-tetrahydrofolate contacts are provided by Arg-24, Glu-81, and Lys-120. The TrmE-type G domain occupies Gly-216–Gly-373. Asn-226 is a K(+) binding site. Residues Asn-226–Ser-231, Thr-245–Thr-251, and Asp-270–Gly-273 each bind GTP. Ser-230 contacts Mg(2+). 3 residues coordinate K(+): Thr-245, Ile-247, and Thr-250. Thr-251 serves as a coordination point for Mg(2+). A (6S)-5-formyl-5,6,7,8-tetrahydrofolate-binding site is contributed by Lys-448.

The protein belongs to the TRAFAC class TrmE-Era-EngA-EngB-Septin-like GTPase superfamily. TrmE GTPase family. In terms of assembly, homodimer. Heterotetramer of two MnmE and two MnmG subunits. K(+) is required as a cofactor.

Its subcellular location is the cytoplasm. Functionally, exhibits a very high intrinsic GTPase hydrolysis rate. Involved in the addition of a carboxymethylaminomethyl (cmnm) group at the wobble position (U34) of certain tRNAs, forming tRNA-cmnm(5)s(2)U34. The sequence is that of tRNA modification GTPase MnmE from Neisseria meningitidis serogroup C / serotype 2a (strain ATCC 700532 / DSM 15464 / FAM18).